The sequence spans 196 residues: Nucleoid occlusion factor SlmA (196 aa).

In terms of domain architecture, HTH tetR-type spans 7–68 (PNRRDEILQA…GLIEFIEESI (62 aa)). Residues 31 to 50 (TTAKLAKQVGVSEAALYRHF) constitute a DNA-binding region (H-T-H motif). Residues 71–93 (RVNRILEDEKDTLKRIELLLKLL) are a coiled coil.

It belongs to the nucleoid occlusion factor SlmA family. In terms of assembly, homodimer. Interacts with FtsZ.

The protein resides in the cytoplasm. The protein localises to the nucleoid. Required for nucleoid occlusion (NO) phenomenon, which prevents Z-ring formation and cell division over the nucleoid. Acts as a DNA-associated cell division inhibitor that binds simultaneously chromosomal DNA and FtsZ, and disrupts the assembly of FtsZ polymers. SlmA-DNA-binding sequences (SBS) are dispersed on non-Ter regions of the chromosome, preventing FtsZ polymerization at these regions. The sequence is that of Nucleoid occlusion factor SlmA from Aliivibrio fischeri (strain MJ11) (Vibrio fischeri).